The primary structure comprises 159 residues: Ribosomal RNA large subunit methyltransferase H (159 aa).

S-adenosyl-L-methionine-binding residues include Leu-76 and Gly-108.

Belongs to the RNA methyltransferase RlmH family. As to quaternary structure, homodimer.

The protein localises to the cytoplasm. The enzyme catalyses pseudouridine(1915) in 23S rRNA + S-adenosyl-L-methionine = N(3)-methylpseudouridine(1915) in 23S rRNA + S-adenosyl-L-homocysteine + H(+). Its function is as follows. Specifically methylates the pseudouridine at position 1915 (m3Psi1915) in 23S rRNA. The chain is Ribosomal RNA large subunit methyltransferase H from Limosilactobacillus fermentum (strain NBRC 3956 / LMG 18251) (Lactobacillus fermentum).